Here is a 363-residue protein sequence, read N- to C-terminus: Putative aryl-alcohol dehydrogenase AAD3 (363 aa).

The protein belongs to the aldo/keto reductase family. Aldo/keto reductase 2 subfamily.

This is Putative aryl-alcohol dehydrogenase AAD3 (AAD3) from Saccharomyces cerevisiae (strain ATCC 204508 / S288c) (Baker's yeast).